We begin with the raw amino-acid sequence, 470 residues long: FLYWCH transcription factor 2 (470 aa).

The tract at residues 102-148 (SQLISEDTRPSASSSPSSTATAVSNSGQSNATSTSSSSTEPEYKPRN) is disordered. The span at 111 to 140 (PSASSSPSSTATAVSNSGQSNATSTSSSST) shows a compositional bias: low complexity. The segment at 145 to 204 (KPRNVREKVYADGYIMSFDKKSCCGTKEFWRCERKNDCNARMHSDINTREIVRKLHPHNH) adopts an FLYWCH-type zinc-finger fold.

In terms of biological role, probable transcription factor. May bind to the promoters of target genes, including micro-RNA genes, in order to repress expression, and acting redundantly with flh-1 and flh-3. This chain is FLYWCH transcription factor 2, found in Caenorhabditis elegans.